Reading from the N-terminus, the 215-residue chain is Peptide methionine sulfoxide reductase MsrA (215 aa).

Cys-57 is a catalytic residue.

It belongs to the MsrA Met sulfoxide reductase family.

The enzyme catalyses L-methionyl-[protein] + [thioredoxin]-disulfide + H2O = L-methionyl-(S)-S-oxide-[protein] + [thioredoxin]-dithiol. It catalyses the reaction [thioredoxin]-disulfide + L-methionine + H2O = L-methionine (S)-S-oxide + [thioredoxin]-dithiol. In terms of biological role, has an important function as a repair enzyme for proteins that have been inactivated by oxidation. Catalyzes the reversible oxidation-reduction of methionine sulfoxide in proteins to methionine. In Saccharophagus degradans (strain 2-40 / ATCC 43961 / DSM 17024), this protein is Peptide methionine sulfoxide reductase MsrA.